A 508-amino-acid polypeptide reads, in one-letter code: Flavonoid 3'-monooxygenase CYP75B137 (508 aa).

Residues 2–22 traverse the membrane as a helical segment; it reads LTFFFLWISTLLLSSFIVYLL. Heme is bound at residue Cys445.

The protein belongs to the cytochrome P450 family. Requires heme as cofactor. As to expression, expressed in young cromes.

It is found in the membrane. It catalyses the reaction a 3'-unsubstituted flavone + reduced [NADPH--hemoprotein reductase] + O2 = a 3'-hydroxyflavone + oxidized [NADPH--hemoprotein reductase] + H2O + H(+). The enzyme catalyses (2S)-naringenin + reduced [NADPH--hemoprotein reductase] + O2 = (S)-eriodictyol + oxidized [NADPH--hemoprotein reductase] + H2O + H(+). It carries out the reaction (2R,3R)-dihydrokaempferol + reduced [NADPH--hemoprotein reductase] + O2 = (2R,3R)-dihydroquercetin + oxidized [NADPH--hemoprotein reductase] + H2O + H(+). The catalysed reaction is kaempferol + reduced [NADPH--hemoprotein reductase] + O2 = quercetin + oxidized [NADPH--hemoprotein reductase] + H2O + H(+). It functions in the pathway flavonoid metabolism. In terms of biological role, flavonoid 3'-hydroxylase that catalyzes the 3'-hydroxylation of flavanones, dihydroflavonols and flavonols. Converts narigenin to eriodictyol, dihydrokaempferol to dihydroquercetin and kaempferol to quercetin. The polypeptide is Flavonoid 3'-monooxygenase CYP75B137 (Crocosmia x crocosmiiflora (Montbretia)).